The chain runs to 89 residues: Large ribosomal subunit protein bL31B (89 aa).

The protein belongs to the bacterial ribosomal protein bL31 family. Type B subfamily. As to quaternary structure, part of the 50S ribosomal subunit.

This is Large ribosomal subunit protein bL31B from Aeromonas salmonicida (strain A449).